We begin with the raw amino-acid sequence, 118 residues long: Large ribosomal subunit protein bL19 (118 aa).

It belongs to the bacterial ribosomal protein bL19 family.

In terms of biological role, this protein is located at the 30S-50S ribosomal subunit interface and may play a role in the structure and function of the aminoacyl-tRNA binding site. The polypeptide is Large ribosomal subunit protein bL19 (Campylobacter concisus (strain 13826)).